The sequence spans 209 residues: Small ribosomal subunit protein uS5 (209 aa).

In terms of domain architecture, S5 DRBM spans 48–111; sequence LEDEVLDINM…DAAKLNITYI (64 aa).

Belongs to the universal ribosomal protein uS5 family. Part of the 30S ribosomal subunit. Contacts protein S4.

With S4 and S12 plays an important role in translational accuracy. The sequence is that of Small ribosomal subunit protein uS5 from Methanosarcina acetivorans (strain ATCC 35395 / DSM 2834 / JCM 12185 / C2A).